A 73-amino-acid polypeptide reads, in one-letter code: UPF0346 protein BLi02292/BL01432 (73 aa).

This sequence belongs to the UPF0346 family.

This chain is UPF0346 protein BLi02292/BL01432, found in Bacillus licheniformis (strain ATCC 14580 / DSM 13 / JCM 2505 / CCUG 7422 / NBRC 12200 / NCIMB 9375 / NCTC 10341 / NRRL NRS-1264 / Gibson 46).